The chain runs to 481 residues: Mechanosensory protein 2 (481 aa).

A compositionally biased stretch (low complexity) spans 1–22; it reads MSATMSSARNSVVSLSSNGSVK. 2 disordered regions span residues 1 to 67 and 80 to 104; these read MSAT…MATR and SANS…GNGK. Residues 27 to 38 are compositionally biased toward polar residues; it reads LVSNERSSSIQQ. The span at 86–104 shows a compositional bias: basic and acidic residues; that stretch reads DSVKKEKQAEKDVEKGNGK. The helical transmembrane segment at 115 to 135 threads the bilayer; it reads GVCGWILTILSYLLIFFTLPI. Residues 403–421 are compositionally biased toward gly residues; that stretch reads EGGGGHGHSHGGGGGGLGS. The interval 403-481 is disordered; the sequence is EGGGGHGHSH…SQLDPALLIR (79 aa). Over residues 433-447 the composition is skewed to low complexity; sequence SGPSTTTTSGRPLLR. Polar residues predominate over residues 463–473; that stretch reads APNQSQTSVSQ.

Belongs to the band 7/mec-2 family. As to quaternary structure, component of a non-voltage-gated amiloride-sensitive cation channel complex (also called the degenerin channel complex) composed of at least the mec-2, mec-4, mec-6 and mec-10 subunits; the complex mediates mechanotransduction in touch cells. Interacts with mec-6 and mec-4.

The protein localises to the membrane. Functionally, subunit of an amiloride-sensitive cation channel (degenerin channel complex) permeable for sodium, potassium, lithium and N-methylglucamine, and required for mechanosensory transduction (touch sensitivity). Positively regulates the activity of the putative mechanosensory transduction channel. May link the mechanosensory channel and the microtubule cytoskeleton of the touch receptor neurons. Required for the function of a set of six touch receptor neurons. The protein is Mechanosensory protein 2 of Caenorhabditis elegans.